A 101-amino-acid polypeptide reads, in one-letter code: Vacuolar ATPase assembly integral membrane protein VMA21 (101 aa).

The Cytoplasmic segment spans residues 1-25; that stretch reads MERLDKAALNALQPSDFRNESSLAS. A helical membrane pass occupies residues 26-46; sequence TLKTLLFFTALMITVPIGLYF. Residues 47–65 lie on the Lumenal side of the membrane; sequence TTKSYVFEGAFGMSNRDSY. Residues 66-86 traverse the membrane as a helical segment; it reads FYAAIVAVVAVHVVLALFVYV. At 87 to 101 the chain is on the cytoplasmic side; the sequence is AWNEGSRQWREGKQD.

The protein belongs to the VMA21 family. In terms of assembly, associates with the V0 complex of the vacuolar ATPase (V-ATPase). Interacts with ATP6AP2.

It is found in the endoplasmic reticulum membrane. Its subcellular location is the endoplasmic reticulum-Golgi intermediate compartment membrane. The protein resides in the cytoplasmic vesicle. It localises to the COPII-coated vesicle membrane. Required for the assembly of the V0 complex of the vacuolar ATPase (V-ATPase) in the endoplasmic reticulum. The polypeptide is Vacuolar ATPase assembly integral membrane protein VMA21 (Bos taurus (Bovine)).